The sequence spans 836 residues: Spliceosome associated factor 3, U4/U6 recycling protein (836 aa).

HAT repeat units follow at residues E127 to S163, K296 to D329, R331 to R367, K418 to Q451, and G453 to E486. A disordered region spans residues R507–A585. A compositionally biased stretch (basic and acidic residues) spans I540 to G550. Low complexity predominate over residues S558 to S579. 2 RRM domains span residues R593–P668 and S683–P760. Disordered stretches follow at residues L757–G786 and A811–R830. Residues E816 to D827 are compositionally biased toward polar residues.

In terms of assembly, forms a complex composed of sart-3, terminal uridylyltransferase usip-1 and U6 snRNA; complex formation is mediated by usip-1 and sart-3 binding to U6 snRNA. Associates with U4 and U6 snRNP complexes, probably by interacting with U4 and U6 snRNAs. As to expression, ubiquitously expressed.

Its subcellular location is the nucleus. It is found in the nucleoplasm. Functionally, U6 snRNP-binding protein that functions as a recycling factor of the splicing machinery. Promotes the initial reassembly of U4 and U6 snRNPs following their ejection from the spliceosome during its maturation. The polypeptide is Spliceosome associated factor 3, U4/U6 recycling protein (Caenorhabditis elegans).